The primary structure comprises 332 residues: DNA packaging protein (332 aa).

Residues methionine 1 to arginine 207 form an ATPase region. Glycine 24–serine 31 provides a ligand contact to ATP. The segment at lysine 233–glutamine 332 is DNA-binding.

It belongs to the phi29likevirus gp16 family. Homopentamer. Interacts with the packaging RNA (pRNA). Part of a DNA-gp3-gp16 complex.

It carries out the reaction ATP + H2O = ADP + phosphate + H(+). Functionally, ATPase required for the genome encapsidation reaction. Part of the active packaging motor via the binding to the packaging RNA (pRNA), itself fixed to the head-tail connector at the unique portal vertex of the prohead. Binds and supercoils the pre-formed, unit-length DNA bound to gp3 to produce an initiation complex for DNA packaging. Provides the energy to actively pump the viral DNA into the prohead. Approximately one molecule of ATP is used in the packaging of 2 bp of viral DNA. ATP hydrolysis results in a conformational change that causes the arginine/lysine finger of one subunit to move into the active site of its neighbor, where it interacts with the negatively charged oxygens on the gamma-phosphate of ATP. After packaging, the ATPase and the pRNA are released from the prohead. This chain is DNA packaging protein (16), found in Bacillus phage phi29 (Bacteriophage phi-29).